Consider the following 181-residue polypeptide: ATP-dependent protease subunit HslV (181 aa).

Thr9 is an active-site residue. Na(+)-binding residues include Ala166, Cys169, and Thr172.

It belongs to the peptidase T1B family. HslV subfamily. In terms of assembly, a double ring-shaped homohexamer of HslV is capped on each side by a ring-shaped HslU homohexamer. The assembly of the HslU/HslV complex is dependent on binding of ATP.

The protein localises to the cytoplasm. The enzyme catalyses ATP-dependent cleavage of peptide bonds with broad specificity.. With respect to regulation, allosterically activated by HslU binding. In terms of biological role, protease subunit of a proteasome-like degradation complex believed to be a general protein degrading machinery. In Staphylococcus aureus (strain bovine RF122 / ET3-1), this protein is ATP-dependent protease subunit HslV.